A 450-amino-acid chain; its full sequence is 3',5'-cyclic-AMP phosphodiesterase 7B (450 aa).

In terms of domain architecture, PDEase spans 97–420 (LDEDYLGQAR…AQWKSLLPRQ (324 aa)). H173 (proton donor) is an active-site residue. Positions 177, 213, 214, and 323 each coordinate a divalent metal cation. Positions 418-450 (PRQHRSRGSSGSGPDHDHAGQGTESEEQEGDSP) are disordered. S426 carries the post-translational modification Phosphoserine. The span at 441 to 450 (ESEEQEGDSP) shows a compositional bias: acidic residues.

Belongs to the cyclic nucleotide phosphodiesterase family. PDE7 subfamily. The cofactor is a divalent metal cation. Highly expressed in brain. Also expressed in heart, liver, skeletal muscle and pancreas.

It carries out the reaction 3',5'-cyclic AMP + H2O = AMP + H(+). It functions in the pathway purine metabolism; 3',5'-cyclic AMP degradation; AMP from 3',5'-cyclic AMP: step 1/1. Its activity is regulated as follows. Inhibited by dipyridamole, IBMX and SCH 51866. Insensitive to zaprinast, rolipram, and milrinone. Its function is as follows. Hydrolyzes the second messenger cAMP, which is a key regulator of many important physiological processes. May be involved in the control of cAMP-mediated neural activity and cAMP metabolism in the brain. In Homo sapiens (Human), this protein is 3',5'-cyclic-AMP phosphodiesterase 7B.